The sequence spans 543 residues: uncharacterized protein (543 aa).

Residues 1-93 (MSFVTAAPEM…GGAYSSAEAA (93 aa)) enclose the PE domain. The segment at 194–214 (GGAGGPGGPTDVPAGTGGAGG) is disordered.

This sequence belongs to the mycobacterial PE family. PGRS subfamily.

This is an uncharacterized protein from Mycobacterium tuberculosis (strain CDC 1551 / Oshkosh).